A 196-amino-acid chain; its full sequence is Orotate phosphoribosyltransferase (196 aa).

117–125 (EDIVTTGLS) provides a ligand contact to 5-phospho-alpha-D-ribose 1-diphosphate. Threonine 121 and arginine 149 together coordinate orotate.

The protein belongs to the purine/pyrimidine phosphoribosyltransferase family. PyrE subfamily. As to quaternary structure, homodimer. It depends on Mg(2+) as a cofactor.

It carries out the reaction orotidine 5'-phosphate + diphosphate = orotate + 5-phospho-alpha-D-ribose 1-diphosphate. Its pathway is pyrimidine metabolism; UMP biosynthesis via de novo pathway; UMP from orotate: step 1/2. In terms of biological role, catalyzes the transfer of a ribosyl phosphate group from 5-phosphoribose 1-diphosphate to orotate, leading to the formation of orotidine monophosphate (OMP). The polypeptide is Orotate phosphoribosyltransferase (Methylobacterium sp. (strain 4-46)).